The following is a 486-amino-acid chain: Cardiolipin synthase A (486 aa).

A run of 2 helical transmembrane segments spans residues 3 to 23 (TFYT…IAGV) and 38 to 58 (MAWL…YLSV). PLD phosphodiesterase domains are found at residues 219 to 246 (MDLR…VDPR) and 399 to 426 (EGGL…DMRS). Active-site residues include His224, Lys226, Asp231, His404, Lys406, and Asp411.

The protein belongs to the phospholipase D family. Cardiolipin synthase subfamily. ClsA sub-subfamily.

The protein resides in the cell inner membrane. It catalyses the reaction 2 a 1,2-diacyl-sn-glycero-3-phospho-(1'-sn-glycerol) = a cardiolipin + glycerol. Catalyzes the reversible phosphatidyl group transfer from one phosphatidylglycerol molecule to another to form cardiolipin (CL) (diphosphatidylglycerol) and glycerol. The protein is Cardiolipin synthase A of Cronobacter sakazakii (strain ATCC BAA-894) (Enterobacter sakazakii).